We begin with the raw amino-acid sequence, 154 residues long: MKIPLGILLSENQADKENILKHLEENSYIITVGDRTTEKMIDFDLIPSLQIVDGIEKREKREPPKLVNTTEITVDNPPAEITSQSIDVIKKAFSMESPVRILVTGEEDLLVLPVCIHAPENSVVMYGQPNEGLVIVKITSEIRNKVQSLLDLME.

3 residues coordinate GTP: Asp34, Asp53, and Glu107.

It belongs to the GTP-dependent DPCK family.

The catalysed reaction is 3'-dephospho-CoA + GTP = GDP + CoA + H(+). It participates in cofactor biosynthesis; coenzyme A biosynthesis. In terms of biological role, catalyzes the GTP-dependent phosphorylation of the 3'-hydroxyl group of dephosphocoenzyme A to form coenzyme A (CoA). This is GTP-dependent dephospho-CoA kinase from Nitrosopumilus maritimus (strain SCM1).